Consider the following 308-residue polypeptide: MQIKFLTTLATVLTSVAAMGDLAFNLGVKNDDGTCKDVSTFEGDLDFLKSHSKIIKTYAVSDCNTLQNLGPAAEAEGFQIQLGIWPNDDAHFEAEKEALQNYLPKISVSTIKIFLVGSEALYREDLTASELASKINEIKDLVKGIKDKNGKSYSSVPVGTVDSWNVLVDGASKPAIDAADVVYSNSFSYWQKNSQANASYSLFDDVMQALQTLQTAKGSTDIEFWVGETGWPTDGSSYGDSVPSVENAADQWQKGICALRAWGINVAVYEAFDEAWKPDTSGTSSVEKHWGVWQSDKTLKYSIDCKFN.

Residues 1 to 18 (MQIKFLTTLATVLTSVAA) form the signal peptide. E119 acts as the Proton donor in catalysis. A glycan (N-linked (GlcNAc...) asparagine) is linked at N197. E228 (nucleophile) is an active-site residue.

Belongs to the glycosyl hydrolase 17 family.

It is found in the secreted. The protein resides in the cell wall. The protein localises to the cytoplasm. It catalyses the reaction Successive hydrolysis of beta-D-glucose units from the non-reducing ends of (1-&gt;3)-beta-D-glucans, releasing alpha-glucose.. Functionally, cell wall glucan 1,3-beta-glucosidase involved in cell wall biosynthesis and virulence. Crucial for delivery of beta-1,3-glucan to the biofilm matrix and for accumulation of mature matrix biomass. Plays a role as a major antigen in human systemic candidiasis patients. This Candida albicans (strain SC5314 / ATCC MYA-2876) (Yeast) protein is Glucan 1,3-beta-glucosidase BGL2 (BGL2).